We begin with the raw amino-acid sequence, 175 residues long: Large ribosomal subunit protein uL10 (175 aa).

The protein belongs to the universal ribosomal protein uL10 family. Part of the ribosomal stalk of the 50S ribosomal subunit. The N-terminus interacts with L11 and the large rRNA to form the base of the stalk. The C-terminus forms an elongated spine to which L12 dimers bind in a sequential fashion forming a multimeric L10(L12)X complex.

In terms of biological role, forms part of the ribosomal stalk, playing a central role in the interaction of the ribosome with GTP-bound translation factors. This chain is Large ribosomal subunit protein uL10, found in Methylobacterium sp. (strain 4-46).